The primary structure comprises 199 residues: Inner membrane-spanning protein YciB (199 aa).

The next 6 helical transmembrane spans lie at 7–27 (HPLF…AANA), 32–52 (FVAT…SYVV), 56–76 (IPLM…LTLV), 93–113 (LFAG…AIMF), 126–146 (VLTL…ELIW), and 153–173 (FWVN…AMMQ).

This sequence belongs to the YciB family.

The protein localises to the cell inner membrane. Plays a role in cell envelope biogenesis, maintenance of cell envelope integrity and membrane homeostasis. The protein is Inner membrane-spanning protein YciB of Nitrobacter hamburgensis (strain DSM 10229 / NCIMB 13809 / X14).